The following is a 353-amino-acid chain: D-alanine--D-alanine ligase (353 aa).

The region spanning K135–Q344 is the ATP-grasp domain. E171 to E226 contributes to the ATP binding site. The Mg(2+) site is built by D297, E311, and N313.

The protein belongs to the D-alanine--D-alanine ligase family. Mg(2+) serves as cofactor. The cofactor is Mn(2+).

It is found in the cytoplasm. The enzyme catalyses 2 D-alanine + ATP = D-alanyl-D-alanine + ADP + phosphate + H(+). It participates in cell wall biogenesis; peptidoglycan biosynthesis. Cell wall formation. This chain is D-alanine--D-alanine ligase, found in Picosynechococcus sp. (strain ATCC 27264 / PCC 7002 / PR-6) (Agmenellum quadruplicatum).